A 449-amino-acid polypeptide reads, in one-letter code: 3-phosphoshikimate 1-carboxyvinyltransferase (449 aa).

The disordered stretch occupies residues 1–23 (MSHSASPKPATARRSEALTGEIR). 3-phosphoshikimate contacts are provided by Lys-28, Ser-29, and Arg-33. Lys-28 is a binding site for phosphoenolpyruvate. Phosphoenolpyruvate is bound by residues Gly-100 and Arg-128. 3-phosphoshikimate is bound by residues Ser-173, Gln-175, Asp-326, and Lys-353. Residue Gln-175 coordinates phosphoenolpyruvate. Catalysis depends on Asp-326, which acts as the Proton acceptor. The phosphoenolpyruvate site is built by Arg-357 and Arg-402.

Belongs to the EPSP synthase family. As to quaternary structure, monomer.

The protein localises to the cytoplasm. It catalyses the reaction 3-phosphoshikimate + phosphoenolpyruvate = 5-O-(1-carboxyvinyl)-3-phosphoshikimate + phosphate. It participates in metabolic intermediate biosynthesis; chorismate biosynthesis; chorismate from D-erythrose 4-phosphate and phosphoenolpyruvate: step 6/7. Its function is as follows. Catalyzes the transfer of the enolpyruvyl moiety of phosphoenolpyruvate (PEP) to the 5-hydroxyl of shikimate-3-phosphate (S3P) to produce enolpyruvyl shikimate-3-phosphate and inorganic phosphate. This chain is 3-phosphoshikimate 1-carboxyvinyltransferase, found in Pseudomonas sp. (strain PG2982).